Here is a 49-residue protein sequence, read N- to C-terminus: Large ribosomal subunit protein bL33 (49 aa).

This sequence belongs to the bacterial ribosomal protein bL33 family.

The chain is Large ribosomal subunit protein bL33 from Syntrophomonas wolfei subsp. wolfei (strain DSM 2245B / Goettingen).